The chain runs to 853 residues: DNA mismatch repair protein MutS (853 aa).

614–621 is an ATP binding site; it reads GPNMGGKS.

It belongs to the DNA mismatch repair MutS family.

Functionally, this protein is involved in the repair of mismatches in DNA. It is possible that it carries out the mismatch recognition step. This protein has a weak ATPase activity. The polypeptide is DNA mismatch repair protein MutS (Escherichia coli O6:K15:H31 (strain 536 / UPEC)).